Consider the following 307-residue polypeptide: MFQFVKKKNEFLKFARLGSRAFTQNAQKTHSKGSNIALVSSSLLSVGMIALYYNVYGPSLSAGTPKEEGLHFIQHDWPQSKVLSGFDHASLRRGFQVYREVCSACHSLNLIAWRHLVGVTHTADEAKQMASEVEYEDGPDDEGNMFKRPGKLSDFLPPPYPNVEAARASNNGAAPPDLSCVVRGRHGGQDYIYSLLTGYTEPPAGVEVPDGMNFNPFFPGTQIAMARPLFDDAVEFEDGTPATTAQAAKDVVNFLHWASEPELDIRKKMGFQVITVLTILTALSMWYKRFKWTPIKNRKIFYQRPIK.

The N-terminal 56 residues, 1–56, are a transit peptide targeting the mitochondrion; sequence MFQFVKKKNEFLKFARLGSRAFTQNAQKTHSKGSNIALVSSSLLSVGMIALYYNVY. Residues 57 to 269 lie on the Mitochondrial intermembrane side of the membrane; it reads GPSLSAGTPK…EPELDIRKKM (213 aa). Residues 89 to 259 form the Cytochrome c domain; it reads ASLRRGFQVY…DVVNFLHWAS (171 aa). Heme c contacts are provided by cysteine 102, cysteine 105, histidine 106, and methionine 225. A helical membrane pass occupies residues 270-287; it reads GFQVITVLTILTALSMWY. Over 288-307 the chain is Mitochondrial matrix; it reads KRFKWTPIKNRKIFYQRPIK.

The protein belongs to the cytochrome c family. Component of the ubiquinol-cytochrome c oxidoreductase (cytochrome b-c1 complex, complex III, CIII), a multisubunit enzyme composed of 3 respiratory subunits cytochrome b, cytochrome c1 and Rieske protein, 2 core protein subunits, and additional low-molecular weight protein subunits. The complex exists as an obligatory dimer and forms supercomplexes (SCs) in the inner mitochondrial membrane with cytochrome c oxidase (complex IV, CIV). Requires heme c as cofactor.

The protein resides in the mitochondrion inner membrane. It catalyses the reaction a quinol + 2 Fe(III)-[cytochrome c](out) = a quinone + 2 Fe(II)-[cytochrome c](out) + 2 H(+)(out). Functionally, component of the ubiquinol-cytochrome c oxidoreductase, a multisubunit transmembrane complex that is part of the mitochondrial electron transport chain which drives oxidative phosphorylation. The respiratory chain contains 3 multisubunit complexes succinate dehydrogenase (complex II, CII), ubiquinol-cytochrome c oxidoreductase (cytochrome b-c1 complex, complex III, CIII) and cytochrome c oxidase (complex IV, CIV), that cooperate to transfer electrons derived from NADH and succinate to molecular oxygen, creating an electrochemical gradient over the inner membrane that drives transmembrane transport and the ATP synthase. The cytochrome b-c1 complex catalyzes electron transfer from ubiquinol to cytochrome c, linking this redox reaction to translocation of protons across the mitochondrial inner membrane, with protons being carried across the membrane as hydrogens on the quinol. In the process called Q cycle, 2 protons are consumed from the matrix, 4 protons are released into the intermembrane space and 2 electrons are passed to cytochrome c. Cytochrome c1 is a catalytic core subunit containing a c-type heme. It transfers electrons from the [2Fe-2S] iron-sulfur cluster of the Rieske protein to cytochrome c. The chain is Cytochrome c1, heme protein, mitochondrial (cyt1) from Schizosaccharomyces pombe (strain 972 / ATCC 24843) (Fission yeast).